Here is a 493-residue protein sequence, read N- to C-terminus: Transcript termination protein OPG145 (493 aa).

One can recognise a Helicase ATP-binding domain in the interval 100–256; that stretch reads MIESKRPLYI…NSIINIAKLS (157 aa). 113-120 contributes to the ATP binding site; the sequence is LACGFGKT. Residues 206–209 carry the DESH box motif; sequence DESH. The region spanning 309-456 is the Helicase C-terminal domain; the sequence is ILDTLVEEFK…IISLSVDKLG (148 aa).

This sequence belongs to the helicase family. Poxviruses subfamily. Interacts with OPG087. Might be part of a transcription complex composed at least of OPG087, OPG110, and OPG145.

It is found in the virion. Its function is as follows. DNA helicase which seems to act as a postreplicative transcription termination factor. Involved in ATP-dependent release of nascent RNA. Forms a stable complex with single-stranded DNA, and to a lesser extent RNA. This is Transcript termination protein OPG145 (OPG145) from Homo sapiens (Human).